The following is a 537-amino-acid chain: MSRRVEFDMSHEDHTDRRRTNTFSSEEDGVPNEVADYLVYFSRMIDEQNVPEILTLYDQAFPDLTERFFRDRMWPDENVVERIIGPGNKLFIILYKELYYRQLYARNARGPLLVHRYESFMNYQELFSELLSSKDPIPLSLPNVWLWDIIDEFVYQFQAFCLYKANPGKRNADEVEDLINIEENQNAWNIYPVLNILYSLLSKSQIVEQLKALKEKRNPDSVADEFGQSDLYFKLGYFALIGLLRTHVLLGDYHQALKTVQYVDIDPKGIYNTVPTCLVTLHYFVGFSHLMMRNYGEATKMFVNCLLYIQRTKTVQSQQPSKKNFQYDVIGKTWDQLFYLLAICLAVQPQRIDESIASQLAERCGERMMHMANGNVDEFRNAFSTGCPKFLSPTTVVYEGVNQSKEPLLRQTQSFLEGIESQMALPVLRGYLKLYTTLPTKKLASFMDVDEENYDSFLGKLLTYKMIVNELGKEAGPSTVDDDEPQTDIDFYVDRDMINIADTKVARHVGEHFLRHIQKLQEVQDVLKRLDSAGQKP.

A compositionally biased stretch (basic and acidic residues) spans 1-19 (MSRRVEFDMSHEDHTDRRR). Residues 1 to 28 (MSRRVEFDMSHEDHTDRRRTNTFSSEED) are disordered. The 189-residue stretch at 297–485 (EATKMFVNCL…GPSTVDDDEP (189 aa)) folds into the PCI domain.

It belongs to the eIF-3 subunit L family. As to quaternary structure, component of the eukaryotic translation initiation factor 3 (eIF-3) complex.

It is found in the cytoplasm. Functionally, component of the eukaryotic translation initiation factor 3 (eIF-3) complex, which is involved in protein synthesis of a specialized repertoire of mRNAs and, together with other initiation factors, stimulates binding of mRNA and methionyl-tRNAi to the 40S ribosome. The eIF-3 complex specifically targets and initiates translation of a subset of mRNAs involved in cell proliferation. The chain is Eukaryotic translation initiation factor 3 subunit L from Caenorhabditis briggsae.